The chain runs to 147 residues: UPF0179 protein NP_3406A (147 aa).

The protein belongs to the UPF0179 family.

The sequence is that of UPF0179 protein NP_3406A from Natronomonas pharaonis (strain ATCC 35678 / DSM 2160 / CIP 103997 / JCM 8858 / NBRC 14720 / NCIMB 2260 / Gabara) (Halobacterium pharaonis).